Here is a 36-residue protein sequence, read N- to C-terminus: Photosystem II reaction center protein M (36 aa).

Residues 7–27 (GFVASLMFVLVPTVFLIVLFI) traverse the membrane as a helical segment.

This sequence belongs to the PsbM family. In terms of assembly, PSII is composed of 1 copy each of membrane proteins PsbA, PsbB, PsbC, PsbD, PsbE, PsbF, PsbH, PsbI, PsbJ, PsbK, PsbL, PsbM, PsbT, PsbX, PsbY, PsbZ, Psb30/Ycf12, peripheral proteins PsbO, CyanoQ (PsbQ), PsbU, PsbV and a large number of cofactors. It forms dimeric complexes.

The protein resides in the cellular thylakoid membrane. In terms of biological role, one of the components of the core complex of photosystem II (PSII). PSII is a light-driven water:plastoquinone oxidoreductase that uses light energy to abstract electrons from H(2)O, generating O(2) and a proton gradient subsequently used for ATP formation. It consists of a core antenna complex that captures photons, and an electron transfer chain that converts photonic excitation into a charge separation. This subunit is found at the monomer-monomer interface. The chain is Photosystem II reaction center protein M from Synechococcus sp. (strain CC9311).